A 148-amino-acid chain; its full sequence is Large ribosomal subunit protein uL13 (148 aa).

This sequence belongs to the universal ribosomal protein uL13 family. As to quaternary structure, part of the 50S ribosomal subunit.

In terms of biological role, this protein is one of the early assembly proteins of the 50S ribosomal subunit, although it is not seen to bind rRNA by itself. It is important during the early stages of 50S assembly. The protein is Large ribosomal subunit protein uL13 of Oenococcus oeni (strain ATCC BAA-331 / PSU-1).